Here is a 428-residue protein sequence, read N- to C-terminus: Nuclear hormone receptor family member nhr-44 (428 aa).

The nuclear receptor DNA-binding region spans serine 21 to arginine 98. NR C4-type zinc fingers lie at residues cysteine 24–cysteine 44 and cysteine 61–cysteine 86. One can recognise an NR LBD domain in the interval serine 181 to serine 427.

Belongs to the nuclear hormone receptor family.

The protein resides in the nucleus. Orphan nuclear receptor. This Caenorhabditis elegans protein is Nuclear hormone receptor family member nhr-44 (nhr-44).